The primary structure comprises 728 residues: Probable LRR receptor-like serine/threonine-protein kinase At1g14390 (728 aa).

Positions Met-1–Ser-27 are cleaved as a signal peptide. Over Gln-28–Leu-356 the chain is Extracellular. Residues Asn-55 and Asn-85 are each glycosylated (N-linked (GlcNAc...) asparagine). LRR repeat units lie at residues Asn-74 to Ser-96, Leu-106 to Leu-130, Ser-131 to Leu-155, Asn-157 to Leu-178, Ser-179 to Asn-202, Ile-204 to Leu-224, Asn-225 to Leu-248, Pro-249 to Asn-272, and Lys-274 to Ser-295. N-linked (GlcNAc...) asparagine glycans are attached at residues Asn-138 and Asn-169. Asn-210 carries N-linked (GlcNAc...) asparagine glycosylation. Asn-253 and Asn-267 each carry an N-linked (GlcNAc...) asparagine glycan. Residues Val-357–Val-377 form a helical membrane-spanning segment. Residues Arg-378–Leu-728 are Cytoplasmic-facing. Residues Thr-421–Ile-709 enclose the Protein kinase domain.

This sequence belongs to the protein kinase superfamily. Ser/Thr protein kinase family.

The protein localises to the membrane. It catalyses the reaction L-seryl-[protein] + ATP = O-phospho-L-seryl-[protein] + ADP + H(+). The catalysed reaction is L-threonyl-[protein] + ATP = O-phospho-L-threonyl-[protein] + ADP + H(+). This Arabidopsis thaliana (Mouse-ear cress) protein is Probable LRR receptor-like serine/threonine-protein kinase At1g14390.